Reading from the N-terminus, the 567-residue chain is uncharacterized protein (567 aa).

The tract at residues 1–26 is disordered; the sequence is MPSEKATTRHLPGAVETLSPRTGRRP. Transmembrane regions (helical) follow at residues 57 to 77, 90 to 110, 142 to 162, 173 to 193, 221 to 241, and 257 to 277; these read AILV…TVAF, VSFG…TYWL, VALA…IIYG, LFSM…LTEF, MLVW…TAIF, and VLIL…ILAW. One can recognise an HAMP domain in the interval 278–329; the sequence is LTATPVRVVREALNRVEQGDLSGDLVVFDGTELGELQRGFNRMVEGLRERER. A Guanylate cyclase domain is found at 361–485; it reads AVVFVDIVGS…EPVNEAARLC (125 aa).

This sequence belongs to the adenylyl cyclase class-3 family.

The protein resides in the cell membrane. This is an uncharacterized protein from Mycobacterium tuberculosis (strain ATCC 25618 / H37Rv).